The primary structure comprises 952 residues: Serine/threonine-protein kinase atg1 (952 aa).

The region spanning 23–329 is the Protein kinase domain; the sequence is FTINEQIGKG…FPEYFAHPVV (307 aa). ATP contacts are provided by residues 29-37 and K52; that span reads IGKGSFATV. The active-site Proton acceptor is the D166. Disordered stretches follow at residues 331–478, 510–573, 783–806, and 920–952; these read EPIP…EAEQ, GRAN…SSPS, RLPE…GGSS, and AIAK…TPPK. Composition is skewed to basic and acidic residues over residues 338 to 347 and 356 to 372; these read GDDRPKEKSP and SLRD…HIDT. The span at 386–398 shows a compositional bias: polar residues; that stretch reads SPRTPNIESNQPF. Basic and acidic residues predominate over residues 429 to 439; it reads PRQRDRKDRTE. Polar residues-rich tracts occupy residues 459–475, 553–573, and 793–806; these read ANLQ…SITE, PDTS…SSPS, and NNRS…GGSS. The segment covering 933–952 has biased composition (low complexity); sequence SPRRSYSGGTTPTINNTPPK.

This sequence belongs to the protein kinase superfamily. Ser/Thr protein kinase family. APG1/unc-51/ULK1 subfamily. In terms of assembly, homodimer. Forms a ternary complex with ATG13 and ATG17.

Its subcellular location is the cytoplasm. The protein resides in the preautophagosomal structure membrane. The enzyme catalyses L-seryl-[protein] + ATP = O-phospho-L-seryl-[protein] + ADP + H(+). The catalysed reaction is L-threonyl-[protein] + ATP = O-phospho-L-threonyl-[protein] + ADP + H(+). Its function is as follows. Serine/threonine protein kinase involved in the cytoplasm to vacuole transport (Cvt) and found to be essential in autophagy, where it is required for the formation of autophagosomes. Involved in the clearance of protein aggregates which cannot be efficiently cleared by the proteasome. Required for selective autophagic degradation of the nucleus (nucleophagy) as well as for mitophagy which contributes to regulate mitochondrial quantity and quality by eliminating the mitochondria to a basal level to fulfill cellular energy requirements and preventing excess ROS production. Also involved in endoplasmic reticulum-specific autophagic process, in selective removal of ER-associated degradation (ERAD) substrates. Plays a key role in ATG9 and ATG23 cycling through the pre-autophagosomal structure and is necessary to promote ATG18 binding to ATG9 through phosphorylation of ATG9. Catalyzes phosphorylation of ATG4, decreasing the interaction between ATG4 and ATG8 and impairing deconjugation of PE-conjugated forms of ATG8. This chain is Serine/threonine-protein kinase atg1, found in Botryotinia fuckeliana (strain B05.10) (Noble rot fungus).